Reading from the N-terminus, the 444-residue chain is Phosphoglucosamine mutase (444 aa).

The active-site Phosphoserine intermediate is Ser-102. Mg(2+) is bound by residues Ser-102, Asp-241, Asp-243, and Asp-245. The residue at position 102 (Ser-102) is a Phosphoserine.

Belongs to the phosphohexose mutase family. Requires Mg(2+) as cofactor. Activated by phosphorylation.

It catalyses the reaction alpha-D-glucosamine 1-phosphate = D-glucosamine 6-phosphate. Its function is as follows. Catalyzes the conversion of glucosamine-6-phosphate to glucosamine-1-phosphate. This Actinobacillus pleuropneumoniae serotype 5b (strain L20) protein is Phosphoglucosamine mutase.